Here is a 270-residue protein sequence, read N- to C-terminus: tRNA pseudouridine synthase A (270 aa).

D51 serves as the catalytic Nucleophile. Y109 contacts substrate.

Belongs to the tRNA pseudouridine synthase TruA family. As to quaternary structure, homodimer.

It catalyses the reaction uridine(38/39/40) in tRNA = pseudouridine(38/39/40) in tRNA. Formation of pseudouridine at positions 38, 39 and 40 in the anticodon stem and loop of transfer RNAs. The polypeptide is tRNA pseudouridine synthase A (Burkholderia orbicola (strain MC0-3)).